We begin with the raw amino-acid sequence, 332 residues long: MNLITIERHILEQQKFFPEFTGELTDLLNDVAFAAKLVRREVVRAGLVDILGFTGDTNIQGEQVKKLDLFANDKIINAIGQHGRFAIMGSEENDGIIIPPKNETGSYALLFDPLDGSSNIDVNVSVGTIFSIYKLKGDDPGKASLNDCLQHGYEQVAAGYVIYGSSVVMVYTTGHGVHGFTYDPTIGEFLLSHENIVTPKSGKYYSINEGSYGQFNEGTKKYLDYIKEEDPATGRPYSTRYIGSLVADFHRNLLTGGIFVYPPTITHPNGKLRLMYEANPLAFICEQAGGRATNGKERILDLQPSELHQRTPLYIGSEADVMIAEEFEQGKR.

The Mg(2+) site is built by Glu-91, Asp-112, Leu-114, and Asp-115. Substrate contacts are provided by residues 115–118 (DGSS), Asn-208, Tyr-241, and Lys-271. Glu-277 is a binding site for Mg(2+).

Belongs to the FBPase class 1 family. As to quaternary structure, homotetramer. Mg(2+) is required as a cofactor.

The protein localises to the cytoplasm. The catalysed reaction is beta-D-fructose 1,6-bisphosphate + H2O = beta-D-fructose 6-phosphate + phosphate. The protein operates within carbohydrate biosynthesis; Calvin cycle. The protein is Fructose-1,6-bisphosphatase class 1 of Chlorobium phaeobacteroides (strain DSM 266 / SMG 266 / 2430).